A 95-amino-acid polypeptide reads, in one-letter code: Large ribosomal subunit protein bL25 (95 aa).

Belongs to the bacterial ribosomal protein bL25 family. In terms of assembly, part of the 50S ribosomal subunit; part of the 5S rRNA/L5/L18/L25 subcomplex. Contacts the 5S rRNA. Binds to the 5S rRNA independently of L5 and L18.

Its function is as follows. This is one of the proteins that binds to the 5S RNA in the ribosome where it forms part of the central protuberance. This is Large ribosomal subunit protein bL25 from Haemophilus ducreyi (strain 35000HP / ATCC 700724).